Here is a 1519-residue protein sequence, read N- to C-terminus: DNA (cytosine-5)-methyltransferase 4 (1519 aa).

A compositionally biased stretch (basic and acidic residues) spans 1–24; sequence MEMETKAGKQKKRSVDSDDDVSKE. The interval 1–31 is disordered; it reads MEMETKAGKQKKRSVDSDDDVSKERRPKRAA. K583 participates in a covalent cross-link: Glycyl lysine isopeptide (Lys-Gly) (interchain with G-Cter in ubiquitin). Positions 641–668 are disordered; it reads ENVEEEELEEVEEEDENEEDDPEENELE. A compositionally biased stretch (acidic residues) spans 642-668; it reads NVEEEELEEVEEEDENEEDDPEENELE. BAH domains are found at residues 715–849 and 916–1033; these read DVVV…FSLP and TTLK…KQFP. The SAM-dependent MTase C5-type domain occupies 1078 to 1512; sequence LATLDIFAGC…RKLKEALYLK (435 aa). Residue C1183 is part of the active site.

This sequence belongs to the class I-like SAM-binding methyltransferase superfamily. C5-methyltransferase family. In terms of tissue distribution, expressed at low levels in vegetative and floral organs.

It localises to the nucleus. It catalyses the reaction a 2'-deoxycytidine in DNA + S-adenosyl-L-methionine = a 5-methyl-2'-deoxycytidine in DNA + S-adenosyl-L-homocysteine + H(+). Its function is as follows. Maintains chromatin CpG methylation that plays a role in genomic imprinting, regulation of embryogenesis and seed viability. Required for proper patterns of CG DNA methylation in dividing cells. This chain is DNA (cytosine-5)-methyltransferase 4 (MET4), found in Arabidopsis thaliana (Mouse-ear cress).